We begin with the raw amino-acid sequence, 986 residues long: MSQWTPEYNELYTLKVDMKSEIPSDAPKTQESLKGILLHPEPIGAAKSFPAGVEMINSKVGNEFSHLCDDSQKQEKDMNGNQQEQEKSLVVRKKRKSQQAGPSYVQNCVKENQGILGLRQHLGTPSDEDNDSSFSDCLSSPSSSLHFGDSDTVTSDEDKEVSVRHSQTILNAKSRSHSARSHKWPRTETESVSGLLMKRPCLHGSSLRRLPCRKRFVKNNSSQRTQKQKERILMQRKKREVLARRKYALLPSSSSSSENDLSSESSSSSSTEGEEDLFVSASENHQNNPAVPSGSIDEDVVVIEASSTPQVTANEEINVTSTDSEVEIVTVGESYRSRSTLGHSRSHWSQGSSSHASRPQEPRNRSRISTVIQPLRQNAAEVVDLTVDEDEPTVVPTTSARMESQATSASINNSNPSTSEQASDTASAVTGSQPSTVSETSATLTSNSTTGTSIGDDSRRTTSSAVMETGPPAMPRLPSCCPQHSPCGGSSQNHHALGHPHTSCFQQHGHHFQHHHHHHHTPHPAVPVSPSFSDPACPVERPPQVQAPCGANSSSGTSYHEQQALPVDLSNNGIRSHGSGSFHGASAFDPCCPVSSSRAAIFGHQAAAAAPSQPLSSIDGYGSSMVAQPQPQPPPQPSLSSCRHYMPPTYASLTRPLHHQASACPHSHGNPPPQTQPPPQVDYVIPHPVHAFHSQISSHATSHPVAPPPPTHLASTAAPIPQHLPPTHQPISHHIPATAPPAQRLHPHEVMQRMEVRRRRMMQHPTRAHERPPPHPHRMHPNYGHGHHIHVPQTMSSHPRQAPERSAWELGIEAGVTAATYTPGALHPHLAHYHAPPRLHHLQLGALPLMVPDMAGYPHIRYISSGLDGTSFRGPFRGNFEELIHLEERLGNVNRGASQGTIERCTYPHKYKKRKLHCKQDGEEGTEEDTEEKCTICLSILEEGEDVRRLPCMHLFHQVCVDQWLITNKKCPICRVDIEAQLPSES.

Residues K19, K28, K34, K47, K59, K73, K87, K96, and K110 each participate in a glycyl lysine isopeptide (Lys-Gly) (interchain with G-Cter in SUMO2) cross-link. The span at 66–89 shows a compositional bias: basic and acidic residues; sequence HLCDDSQKQEKDMNGNQQEQEKSL. The disordered stretch occupies residues 66 to 106; sequence HLCDDSQKQEKDMNGNQQEQEKSLVVRKKRKSQQAGPSYVQ. Residues 120-191 form a disordered region; it reads QHLGTPSDED…HKWPRTETES (72 aa). Residues 132–151 are compositionally biased toward low complexity; the sequence is SSFSDCLSSPSSSLHFGDSD. Residues 164–173 are compositionally biased toward polar residues; that stretch reads RHSQTILNAK. K173 is covalently cross-linked (Glycyl lysine isopeptide (Lys-Gly) (interchain with G-Cter in SUMO2)). The segment covering 174-184 has biased composition (basic residues); the sequence is SRSHSARSHKW. Residues K198 and K218 each participate in a glycyl lysine isopeptide (Lys-Gly) (interchain with G-Cter in SUMO2) cross-link. The segment at 241–404 is interaction with AXIN1; that stretch reads VLARRKYALL…VPTTSARMES (164 aa). The segment at 248–277 is disordered; that stretch reads ALLPSSSSSSENDLSSESSSSSSTEGEEDL. A compositionally biased stretch (low complexity) spans 252–271; sequence SSSSSSENDLSSESSSSSST. Residues 300–304 carry the SUMO interaction motif 1 (SIM) motif; that stretch reads VVVIE. The SUMO interaction motif 2 (SIM) signature appears at 325-331; the sequence is EVEIVTV. The tract at residues 337–373 is disordered; that stretch reads SRSTLGHSRSHWSQGSSSHASRPQEPRNRSRISTVIQ. Low complexity predominate over residues 347–357; it reads HWSQGSSSHAS. The short motif at 382–386 is the SUMO interaction motif 3 (SIM) element; that stretch reads VVDLT. Disordered regions lie at residues 389–471, 506–561, 610–646, 659–684, and 696–719; these read EDEP…ETGP, QQHG…SYHE, APSQ…RHYM, HQAS…VDYV, and ISSH…TAAP. The segment covering 395 to 466 has biased composition (polar residues); it reads VPTTSARMES…DSRRTTSSAV (72 aa). A compositionally biased stretch (basic residues) spans 508-522; that stretch reads HGHHFQHHHHHHHTP. The span at 551-561 shows a compositional bias: polar residues; sequence ANSSSGTSYHE. Positions 670 to 680 are enriched in pro residues; the sequence is NPPPQTQPPPQ. Positions 907 to 909 are ubiquitin binding; that stretch reads YPH. Glycyl lysine isopeptide (Lys-Gly) (interchain with G-Cter in SUMO2) cross-links involve residues K915 and K919. Zn(2+) is bound by residues C934 and C937. An RING-type; atypical zinc finger spans residues 934-975; that stretch reads CTICLSILEEGEDVRRLPCMHLFHQVCVDQWLITNKKCPICR. The interval 949–953 is ubiquitin binding; it reads RLPCM. Zn(2+)-binding residues include H957 and C960.

The protein belongs to the Arkadia family. In terms of assembly, monomer. Interacts with SMAD6, SMAD7, AXIN1, AXIN2 and SKIL isoform SNON. Interacts with (phosphorylated) SMAD2 and SMAD3. Part of a complex containing RNF111, AXIN1 and SMAD7. Interacts (via SIM domains) with SUMO1 and SUMO2.

The protein resides in the nucleus. It is found in the cytoplasm. It localises to the PML body. It catalyses the reaction S-ubiquitinyl-[E2 ubiquitin-conjugating enzyme]-L-cysteine + [acceptor protein]-L-lysine = [E2 ubiquitin-conjugating enzyme]-L-cysteine + N(6)-ubiquitinyl-[acceptor protein]-L-lysine.. It functions in the pathway protein modification; protein ubiquitination. Binds free ubiquitin non-covalently via its RING-type zinc finger. Ubiquitin-binding leads to enhance the E3 ubiquitin-protein ligase activity by stabilizing the ubiquitin-conjugating enzyme E2 (donor ubiquitin) in the 'closed' conformation and activating ubiquitin transfer. Functionally, E3 ubiquitin-protein ligase. Required for mesoderm patterning during embryonic development. Acts as an enhancer of the transcriptional responses of the SMAD2/SMAD3 effectors, which are activated downstream of BMP. Acts by mediating ubiquitination and degradation of SMAD inhibitors such as SMAD7, inducing their proteasomal degradation and thereby enhancing the transcriptional activity of TGF-beta and BMP. In addition to enhance transcription of SMAD2/SMAD3 effectors, also regulates their turnover by mediating their ubiquitination and subsequent degradation, coupling their activation with degradation, thereby ensuring that only effectors 'in use' are degraded. Activates SMAD3/SMAD4-dependent transcription by triggering signal-induced degradation of SNON isoform of SKIL. Associates with UBE2D2 as an E2 enzyme. Specifically binds polysumoylated chains via SUMO interaction motifs (SIMs) and mediates ubiquitination of sumoylated substrates. Catalyzes 'Lys-63'-linked ubiquitination of sumoylated XPC in response to UV irradiation, promoting nucleotide excision repair. Mediates ubiquitination and degradation of sumoylated PML. The regulation of the BMP-SMAD signaling is however independent of sumoylation and is not dependent of SUMO interaction motifs (SIMs). The polypeptide is E3 ubiquitin-protein ligase Arkadia (RNF111) (Pongo abelii (Sumatran orangutan)).